The primary structure comprises 261 residues: DNA repair protein RecO (261 aa).

It belongs to the RecO family.

In terms of biological role, involved in DNA repair and RecF pathway recombination. In Chlorobium phaeobacteroides (strain DSM 266 / SMG 266 / 2430), this protein is DNA repair protein RecO.